A 190-amino-acid polypeptide reads, in one-letter code: Lipid A acyltransferase PagP (190 aa).

Positions Met-1–Ala-18 are cleaved as a signal peptide. Active-site residues include His-60, Asp-103, and Ser-104.

It belongs to the lipid A palmitoyltransferase family. Homodimer.

The protein localises to the cell outer membrane. The enzyme catalyses a lipid A + a 1,2-diacyl-sn-glycero-3-phosphocholine = a hepta-acyl lipid A + a 2-acyl-sn-glycero-3-phosphocholine. The catalysed reaction is a lipid IVA + a 1,2-diacyl-sn-glycero-3-phosphocholine = a lipid IVB + a 2-acyl-sn-glycero-3-phosphocholine. It catalyses the reaction a lipid IIA + a 1,2-diacyl-sn-glycero-3-phosphocholine = a lipid IIB + a 2-acyl-sn-glycero-3-phosphocholine. Its function is as follows. Transfers a fatty acid residue from the sn-1 position of a phospholipid to the N-linked hydroxyfatty acid chain on the proximal unit of lipid A or its precursors. In Legionella pneumophila serogroup 1 (strain 2300/99 Alcoy), this protein is Lipid A acyltransferase PagP.